The chain runs to 130 residues: Small ribosomal subunit protein uS9 (130 aa).

It belongs to the universal ribosomal protein uS9 family.

This is Small ribosomal subunit protein uS9 from Pseudomonas paraeruginosa (strain DSM 24068 / PA7) (Pseudomonas aeruginosa (strain PA7)).